Consider the following 317-residue polypeptide: WD repeat-containing protein 82 (317 aa).

WD repeat units lie at residues 21–60, 107–146, 148–186, 194–233, 238–278, and 282–317; these read ENTD…QSRT, GHTK…CQGL, HLSG…KGPF, EKEC…PLQT, PNNK…KVSV, and DHPG…EEGL.

Belongs to the WD repeat SWD2 family. In terms of assembly, component of the SET1 complex, composed at least of the catalytic subunit Set1, wds/WDR5, Wdr82, Rbbp5, ash2, Cfp1/CXXC1, hcf and Dpy-30L1. Interacts with male-specific lethal (MSL) histone acetyltransferase complex at least composed of mof, msl-1, msl-2 and msl-3. Interacts with su(sable).

It localises to the nucleus. In terms of biological role, component of the SET1 complex that specifically di- and trimethylates 'Lys-4' of histone H3. Together with su(sable), part of a transcription termination checkpoint that promotes transcription termination of aberrant RNAs and their subsequent degradation by the nuclear exosome. This chain is WD repeat-containing protein 82, found in Drosophila melanogaster (Fruit fly).